The sequence spans 447 residues: tRNA threonylcarbamoyladenosine dehydratase 2 (447 aa).

The next 3 membrane-spanning stretches (helical) occupy residues 9 to 29 (LITA…YAWT), 86 to 106 (NQYV…NSLV), and 294 to 314 (ILPV…TWIL).

It belongs to the HesA/MoeB/ThiF family.

It localises to the mitochondrion outer membrane. Functionally, catalyzes the ATP-dependent dehydration of threonylcarbamoyladenosine at position 37 (t(6)A37) to form cyclic t(6)A37 (ct(6)A37) in tRNAs that read codons beginning with adenine. In Saccharomyces cerevisiae (strain ATCC 204508 / S288c) (Baker's yeast), this protein is tRNA threonylcarbamoyladenosine dehydratase 2 (TCD2).